The chain runs to 775 residues: Chitin synthase 6 (775 aa).

Helical transmembrane passes span 19 to 39 (VLLMACLEWFLWLAAFLYCLV), 54 to 74 (CIIVGTAFVLLRVIFLPIMVV), 94 to 114 (LQWFAFWAFAILLTVPWLFCI), 441 to 461 (FMQNTIRTTALLFFVMVLAIM), 470 to 490 (LPVGFIAISLGLNWMLMLYFG), and 498 to 518 (IWLYPLMFILNPFYNWYYMVY). Positions 532 to 541 (RADAAAADSH) are enriched in low complexity. 2 disordered regions span residues 532-603 (RADA…DGKF) and 702-775 (PSAF…KTSR). The segment covering 542–556 (TTAREAAEQAEKQGD) has biased composition (basic and acidic residues). The span at 577–586 (NRESTTTSEL) shows a compositional bias: polar residues. Positions 702 to 713 (PSAFPHAHSASA) are enriched in low complexity. Asn724 is a glycosylation site (N-linked (GlcNAc...) asparagine). Basic and acidic residues predominate over residues 732–741 (RSEDIQRFSE). The segment covering 754–763 (SRNVGNSSFA) has biased composition (polar residues). Asn759 is a glycosylation site (N-linked (GlcNAc...) asparagine). Residues 766–775 (MAKRTPKTSR) are compositionally biased toward basic residues.

This sequence belongs to the chitin synthase family. Class VII subfamily.

The protein resides in the cell membrane. The enzyme catalyses [(1-&gt;4)-N-acetyl-beta-D-glucosaminyl](n) + UDP-N-acetyl-alpha-D-glucosamine = [(1-&gt;4)-N-acetyl-beta-D-glucosaminyl](n+1) + UDP + H(+). Functionally, polymerizes chitin, a structural polymer of the cell wall and septum, by transferring the sugar moiety of UDP-GlcNAc to the non-reducing end of the growing chitin polymer. Shows additive effects in septum formation with CHS1, CHS2, CHS3A, CHS4, CHS5 and CHS7. Involved in virulence and mediates mycotoxin deoxinivalenol (DON) biosynthesis via the regulation of the expression of TRI4, TRI5 and TRI6. The polypeptide is Chitin synthase 6 (Gibberella zeae (strain ATCC MYA-4620 / CBS 123657 / FGSC 9075 / NRRL 31084 / PH-1) (Wheat head blight fungus)).